A 599-amino-acid polypeptide reads, in one-letter code: DNA mismatch repair protein MutL (599 aa).

It belongs to the DNA mismatch repair MutL/HexB family.

This protein is involved in the repair of mismatches in DNA. It is required for dam-dependent methyl-directed DNA mismatch repair. May act as a 'molecular matchmaker', a protein that promotes the formation of a stable complex between two or more DNA-binding proteins in an ATP-dependent manner without itself being part of a final effector complex. The protein is DNA mismatch repair protein MutL of Rhodopseudomonas palustris (strain BisB18).